The primary structure comprises 624 residues: RQC trigger complex subunit CUE3 (624 aa).

The 44-residue stretch at 316–359 (VNEEQLSALMELFPQFSKYQLSQTLLAYDNNIELVTNKIFEDPT) folds into the CUE domain. 3 disordered regions span residues 366 to 390 (REPA…ELSI), 435 to 469 (RDDT…DDSN), and 546 to 624 (SKTG…NNAI). Phosphoserine is present on serine 377. Basic and acidic residues-rich tracts occupy residues 443-455 (DVNR…RIGL) and 568-589 (EQAK…TEQK). A compositionally biased stretch (basic residues) spans 590-617 (KRQHAKNEKRKGARANHNRKKGHDKKLA).

Component of the RQT (ribosome quality control trigger) complex, composed of SLH1, CUE3, and RQT4. Interacts with ubiquitin; the interaction is direct. Interacts with SLH1. Interacts with RQT4. Interacts with HEL2. Associates with translating ribosomes.

It is found in the cytoplasm. Functionally, involved in activation of the ribosome quality control (RQC) pathway, a pathway that degrades nascent peptide chains during problematic translation. Specifically recognizes and binds RPS20/uS10 ubiquitinated by HEL2, promoting recruitment of the RQT (ribosome quality control trigger) complex on stalled ribosomes, followed by disassembly of stalled ribosomes. The polypeptide is RQC trigger complex subunit CUE3 (CUE3) (Saccharomyces cerevisiae (strain ATCC 204508 / S288c) (Baker's yeast)).